A 510-amino-acid chain; its full sequence is MIWHVQNENFILDSTRIFMKAFHLLLFHGSFIFPECILIFGLILLLMIDSTSDQKDRPWFYFISSTTLVMSITALLFRWREEPIISFSGNFQTNNFNEIFQFLILLCSTLCIPLSVEYIECTEMAITEFLLFVLTATLGGMFLCGANDLITLFVAPECFSLCSYLLSGYTKRDVRSNEATMKYLLMGGASSSILVHGFSWLYGSSGGEIELQEIVNGLINTQMYNSPGISIALISITVGIGFKLSPAPFHQWTPDVYEGSPTPVVAFLSVTSKVAASASATRIFDIPFYFSSNEWHLLLEILAILSMILGNLIAITQTSMKRMLAYSSIGQIGYVIIGIIVGDSNDGYASMITYMLFYISMNLGTFACIVSFGLRTGTDNIRDYAGLYTKDPFLALSLALCLLSLGGLPPLAGFFGKLHLFWCGWQAGLYFLVSIGLLTSVVSIYYYLKIIKLLMTGRNQEITPHVRNYRRSPLRSNNSIELSMTVCVIASTIPGISMNPILAIAQDTLF.

12 helical membrane passes run 24–44 (LLLFHGSFIFPECILIFGLIL), 59–79 (WFYFISSTTLVMSITALLFRW), 99–119 (IFQFLILLCSTLCIPLSVEYI), 124–144 (MAITEFLLFVLTATLGGMFLC), 149–169 (LITLFVAPECFSLCSYLLSGY), 183–203 (YLLMGGASSSILVHGFSWLYG), 229–249 (ISIALISITVGIGFKLSPAPF), 295–315 (WHLLLEILAILSMILGNLIAI), 323–343 (MLAYSSIGQIGYVIIGIIVGD), 354–374 (YMLFYISMNLGTFACIVSFGL), 395–415 (ALSLALCLLSLGGLPPLAGFF), and 418–438 (LHLFWCGWQAGLYFLVSIGLL).

Belongs to the complex I subunit 2 family. As to quaternary structure, NDH is composed of at least 16 different subunits, 5 of which are encoded in the nucleus.

It localises to the plastid. It is found in the chloroplast thylakoid membrane. The enzyme catalyses a plastoquinone + NADH + (n+1) H(+)(in) = a plastoquinol + NAD(+) + n H(+)(out). The catalysed reaction is a plastoquinone + NADPH + (n+1) H(+)(in) = a plastoquinol + NADP(+) + n H(+)(out). Functionally, NDH shuttles electrons from NAD(P)H:plastoquinone, via FMN and iron-sulfur (Fe-S) centers, to quinones in the photosynthetic chain and possibly in a chloroplast respiratory chain. The immediate electron acceptor for the enzyme in this species is believed to be plastoquinone. Couples the redox reaction to proton translocation, and thus conserves the redox energy in a proton gradient. This is NAD(P)H-quinone oxidoreductase subunit 2 A, chloroplastic from Dioscorea elephantipes (Elephant's foot yam).